A 352-amino-acid polypeptide reads, in one-letter code: tRNA-specific 2-thiouridylase MnmA (352 aa).

Residues 7–14 and Leu-33 each bind ATP; that span reads GLSGGVDS. Cys-94 acts as the Nucleophile in catalysis. The cysteines at positions 94 and 193 are disulfide-linked. Gly-119 is an ATP binding site. Residues 143-145 form an interaction with tRNA region; sequence KDQ. The active-site Cysteine persulfide intermediate is Cys-193. Residues 298–299 form an interaction with tRNA region; sequence RY.

It belongs to the MnmA/TRMU family.

The protein localises to the cytoplasm. The enzyme catalyses S-sulfanyl-L-cysteinyl-[protein] + uridine(34) in tRNA + AH2 + ATP = 2-thiouridine(34) in tRNA + L-cysteinyl-[protein] + A + AMP + diphosphate + H(+). In terms of biological role, catalyzes the 2-thiolation of uridine at the wobble position (U34) of tRNA, leading to the formation of s(2)U34. This is tRNA-specific 2-thiouridylase MnmA from Nostoc sp. (strain PCC 7120 / SAG 25.82 / UTEX 2576).